The chain runs to 351 residues: Homeobox-leucine zipper protein HOX23 (351 aa).

The segment at 34–128 is disordered; that stretch reads LQDHAHGGHG…SFESGNKLEP (95 aa). The span at 56–65 shows a compositional bias: low complexity; that stretch reads SPFLPDLAMD. The homeobox DNA-binding region spans 101-160; it reads GGEKKRRLSVEQVRTLERSFESGNKLEPERKAQLARALGLQPRQVAIWFQNRRARWKTKQ. Positions 114–128 are enriched in basic and acidic residues; the sequence is RTLERSFESGNKLEP. A leucine-zipper region spans residues 159–203; the sequence is KQLEKDFDALRRQLDAARAENDALLSLNSKLHAEIVALKGGAAAA. Residues 227–263 are disordered; the sequence is EASCSNRSENSSEINLDISRPAPPPPPPPANESPVNR. Polar residues predominate over residues 228–240; the sequence is ASCSNRSENSSEI. A compositionally biased stretch (pro residues) spans 247-257; the sequence is PAPPPPPPPAN.

The protein belongs to the HD-ZIP homeobox family. Class I subfamily. As to expression, expressed in seedlings, roots, stems, leaf sheaths and panicles.

The protein localises to the nucleus. In terms of biological role, probable transcription factor. This chain is Homeobox-leucine zipper protein HOX23 (HOX23), found in Oryza sativa subsp. indica (Rice).